The chain runs to 81 residues: RNA-binding protein Hfq (81 aa).

A Sm domain is found at 10–70; the sequence is DLFLNSVRKS…ISTIMPSQPV (61 aa).

Belongs to the Hfq family. As to quaternary structure, homohexamer.

Functionally, RNA chaperone that binds small regulatory RNA (sRNAs) and mRNAs to facilitate mRNA translational regulation in response to envelope stress, environmental stress and changes in metabolite concentrations. Also binds with high specificity to tRNAs. The sequence is that of RNA-binding protein Hfq from Mesorhizobium japonicum (strain LMG 29417 / CECT 9101 / MAFF 303099) (Mesorhizobium loti (strain MAFF 303099)).